Consider the following 354-residue polypeptide: Arginase-2, mitochondrial (354 aa).

The N-terminal 22 residues, 1-22 (MFLRSSASRLLHGQIPCVLTRS), are a transit peptide targeting the mitochondrion. Mn(2+)-binding residues include His-120, Asp-143, His-145, and Asp-147. Substrate contacts are provided by residues 145–149 (HADIN), 156–158 (SGN), and Glu-202. Positions 251 and 253 each coordinate Mn(2+). The substrate site is built by Thr-265 and Glu-296.

This sequence belongs to the arginase family. In terms of assembly, homotrimer. Mn(2+) is required as a cofactor.

Its subcellular location is the mitochondrion. The catalysed reaction is L-arginine + H2O = urea + L-ornithine. The protein operates within nitrogen metabolism; urea cycle; L-ornithine and urea from L-arginine: step 1/1. May play a role in the regulation of extra-urea cycle arginine metabolism and also in down-regulation of nitric oxide synthesis. Extrahepatic arginase functions to regulate L-arginine bioavailability to nitric oxid synthase (NOS). Arginine metabolism is a critical regulator of innate and adaptive immune responses. Seems to be involved in negative regulation of the survival capacity of activated CD4(+) and CD8(+) T cells. May suppress inflammation-related signaling in asthmatic airway epithelium. May contribute to the immune evasion of H.pylori by restricting M1 macrophage activation and polyamine metabolism. May play a role in promoting prenatal immune suppression. Regulates RPS6KB1 signaling, which promotes endothelial cell senescence and inflammation and implicates NOS3/eNOS dysfunction. Can inhibit endothelial autophagy independently of its enzymatic activity implicating mTORC2 signaling. Involved in vascular smooth muscle cell senescence and apoptosis independently of its enzymatic activity. In Mus musculus (Mouse), this protein is Arginase-2, mitochondrial (Arg2).